The sequence spans 178 residues: Protein 105R (178 aa).

A signal peptide spans 1 to 18 (MYFLFFFLLFLFPVGVKG).

The polypeptide is Protein 105R (Pantherophis guttatus (Corn snake)).